Reading from the N-terminus, the 751-residue chain is Kelch-like protein 1 (751 aa).

2 stretches are compositionally biased toward low complexity: residues 25–36 (PSPASSSPAGGS) and 74–90 (SSSSSSSSSSSSSASSS). 3 disordered regions span residues 25–54 (PSPASSSPAGGSCLQQDSGGGSFEHWGPSQ), 69–98 (FWKKPSSSSSSSSSSSSSASSSPFNPLNGT), and 157–184 (SSIQATGEGCGHRLTSTNHSLTPQSDLD). Over residues 170 to 184 (LTSTNHSLTPQSDLD) the composition is skewed to polar residues. A BTB domain is found at 215–282 (CDVILIVGNR…AYTGCLELKE (68 aa)). 6 Kelch repeats span residues 463–509 (TLYA…VIDD), 510–556 (KLFV…VLEG), 558–603 (IYAV…ALNG), 604–650 (KLYS…TCDG), 652–703 (LYAV…LLGD), and 704–750 (RLYA…VIKQ).

As to expression, highly expressed in brain.

The protein resides in the cytoplasm. The protein localises to the cytoskeleton. May play a role in organizing the actin cytoskeleton of the brain cells. This is Kelch-like protein 1 (Klhl1) from Mus musculus (Mouse).